Reading from the N-terminus, the 215-residue chain is Thiopurine S-methyltransferase (215 aa).

W10, L45, E66, and R123 together coordinate S-adenosyl-L-methionine.

Belongs to the class I-like SAM-binding methyltransferase superfamily. TPMT family.

It localises to the cytoplasm. It catalyses the reaction S-adenosyl-L-methionine + a thiopurine = S-adenosyl-L-homocysteine + a thiopurine S-methylether.. This Pseudomonas putida (strain W619) protein is Thiopurine S-methyltransferase.